Reading from the N-terminus, the 384-residue chain is MIWQEKIDAALDARRVADALRRRYPVAQGAGRWLVADDCQYLNFSSNDYLGLSHHPQIIRAWQQGAEQFGVGSGGSGHVSGYSVAHQVLEEELAEWLGYSRALLFISGFAANQAVIAAMMAKEDRIVADRLSHASLLEAASLSPSPLRRFAHNDVTHLARLLASPCPGQQLVVTEGVFSMDGDSAPLEEIQQVTQQHDGWLMVDDAHGTGVIGEQGRGSCWLQKVKPELLVVTFGKGFGVSGAAVLCSNTVADYLLQFARHLIYSTSMPPAQAQALRASLAVIRSDEGDARREKLAALITRFRAGVQDLPFTLADSWSAIQPLIVGDNSRALQLAEKLRQQGCWVTAIRPPTVPAGTARLRLTLTAAHEMQDIDRLLEVLHGNG.

Position 21 (R21) interacts with substrate. 108–109 contributes to the pyridoxal 5'-phosphate binding site; the sequence is GF. Substrate is bound at residue H133. Residues S179, H207, and T233 each coordinate pyridoxal 5'-phosphate. K236 carries the post-translational modification N6-(pyridoxal phosphate)lysine. T352 contacts substrate.

Belongs to the class-II pyridoxal-phosphate-dependent aminotransferase family. BioF subfamily. As to quaternary structure, homodimer. Pyridoxal 5'-phosphate is required as a cofactor.

It carries out the reaction 6-carboxyhexanoyl-[ACP] + L-alanine + H(+) = (8S)-8-amino-7-oxononanoate + holo-[ACP] + CO2. It functions in the pathway cofactor biosynthesis; biotin biosynthesis. In terms of biological role, catalyzes the decarboxylative condensation of pimeloyl-[acyl-carrier protein] and L-alanine to produce 8-amino-7-oxononanoate (AON), [acyl-carrier protein], and carbon dioxide. The sequence is that of 8-amino-7-oxononanoate synthase from Escherichia coli O6:K15:H31 (strain 536 / UPEC).